The sequence spans 396 residues: ATP-dependent RNA helicase eIF4A (396 aa).

A Q motif motif is present at residues 22–50 (YSFDDLKLKEELLRGIFGYGFVEPSAIQQ). Residues 53–223 (ILPIIEGKDV…SKFMKDPVRI (171 aa)) form the Helicase ATP-binding domain. ATP is bound at residue 66–73 (AQSGTGKT). Positions 171–174 (DEAD) match the DEAD box motif. The Helicase C-terminal domain occupies 234–395 (GIGQYYVNVE…ELPSSISELF (162 aa)).

It belongs to the DEAD box helicase family. eIF4A subfamily. In terms of assembly, component of the eIF4F complex, which composition varies with external and internal environmental conditions. It is composed of at least eIF4A, eIF4E and eIF4G.

Its subcellular location is the cytoplasm. It catalyses the reaction ATP + H2O = ADP + phosphate + H(+). In terms of biological role, ATP-dependent RNA helicase which is a subunit of the eIF4F complex involved in cap recognition and is required for mRNA binding to ribosome. In the current model of translation initiation, eIF4A unwinds RNA secondary structures in the 5'-UTR of mRNAs which is necessary to allow efficient binding of the small ribosomal subunit, and subsequent scanning for the initiator codon. The chain is ATP-dependent RNA helicase eIF4A (TIF1) from Kluyveromyces lactis (strain ATCC 8585 / CBS 2359 / DSM 70799 / NBRC 1267 / NRRL Y-1140 / WM37) (Yeast).